Consider the following 168-residue polypeptide: MDSGKTFDSISNDLFLEILLRLSTKSIDRSRCVSKQWASILCSQDFTESEKFNFINASSFLFSSTKLINYKGKLGGIDLAYNHGGVYPVELRMWVLEDVEKHEWSRHVYSLPETIEFQQCNYNICVGGMNAIGFEDYLNRRVYAFVDYVEDLSVNDAMQLKSSSLQNG.

Residues 5–52 form the F-box domain; the sequence is KTFDSISNDLFLEILLRLSTKSIDRSRCVSKQWASILCSQDFTESEKF.

This Arabidopsis thaliana (Mouse-ear cress) protein is Putative F-box protein At1g30945.